The chain runs to 148 residues: Large ribosomal subunit protein bL9 (148 aa).

Belongs to the bacterial ribosomal protein bL9 family.

Functionally, binds to the 23S rRNA. The polypeptide is Large ribosomal subunit protein bL9 (Parabacteroides distasonis (strain ATCC 8503 / DSM 20701 / CIP 104284 / JCM 5825 / NCTC 11152)).